The following is a 100-amino-acid chain: MYAIVKTGGKQYKVAEGDLVKVEKIEGEPGSSVALSPVLLVDGASITSGDDLSSVAVNAEIVEHTKGPKIRNMHYRNKTGYKRRHGHRQPLTVVKITGIK.

It belongs to the bacterial ribosomal protein bL21 family. Part of the 50S ribosomal subunit. Contacts protein L20.

This protein binds to 23S rRNA in the presence of protein L20. This is Large ribosomal subunit protein bL21 from Corynebacterium kroppenstedtii (strain DSM 44385 / JCM 11950 / CIP 105744 / CCUG 35717).